The primary structure comprises 300 residues: 7-methylguanosine phosphate-specific 5'-nucleotidase (300 aa).

Aspartate 41 serves as the catalytic Nucleophile. Residues aspartate 41 and aspartate 43 each coordinate Mg(2+). Aspartate 43 functions as the Proton donor in the catalytic mechanism. Glutamate 88 provides a ligand contact to CMP. N(7)-methyl-GMP is bound at residue glutamate 88. Substrate contacts are provided by residues 156 to 157 (SA) and lysine 205. Mg(2+) is bound at residue aspartate 230. Lysine 256 carries the post-translational modification N6-acetyllysine.

The protein belongs to the pyrimidine 5'-nucleotidase family. Monomer.

It is found in the cytoplasm. The catalysed reaction is N(7)-methyl-GMP + H2O = N(7)-methylguanosine + phosphate. It catalyses the reaction CMP + H2O = cytidine + phosphate. The enzyme catalyses a ribonucleoside 5'-phosphate + H2O = a ribonucleoside + phosphate. Specifically hydrolyzes 7-methylguanosine monophosphate (m(7)GMP) to 7-methylguanosine and inorganic phosphate. The specific activity for m(7)GMP may protect cells against undesired salvage of m(7)GMP and its incorporation into nucleic acids. Also has weak activity for CMP. UMP and purine nucleotides are poor substrates. This Rattus norvegicus (Rat) protein is 7-methylguanosine phosphate-specific 5'-nucleotidase (Nt5c3b).